Consider the following 150-residue polypeptide: MKPADWLILQRKVRFGDCDSAGVIHFHNLLKWSHEAWEESIEIYGIPYKDIFPDFSIRKSQIVFPIVNCEANFLAPIKIGDFLKVKIAPHKINTHLFQVNSFFIKNGNKVAEGKIIHCSLDIDSRNKIELPDQLERWIEASNVSTNLKEC.

Asp-19 is a catalytic residue.

Belongs to the 4-hydroxybenzoyl-CoA thioesterase family. DHNA-CoA hydrolase subfamily.

The enzyme catalyses 1,4-dihydroxy-2-naphthoyl-CoA + H2O = 1,4-dihydroxy-2-naphthoate + CoA + H(+). Its pathway is cofactor biosynthesis; phylloquinone biosynthesis. It participates in quinol/quinone metabolism; 1,4-dihydroxy-2-naphthoate biosynthesis; 1,4-dihydroxy-2-naphthoate from chorismate: step 7/7. Its function is as follows. Catalyzes the hydrolysis of 1,4-dihydroxy-2-naphthoyl-CoA (DHNA-CoA) to 1,4-dihydroxy-2-naphthoate (DHNA), a reaction involved in phylloquinone (vitamin K1) biosynthesis. The sequence is that of 1,4-dihydroxy-2-naphthoyl-CoA hydrolase from Prochlorococcus marinus (strain MIT 9215).